Reading from the N-terminus, the 481-residue chain is Phloretin 4'-O-glucosyltransferase (481 aa).

Histidine 16 serves as the catalytic Proton acceptor. Histidine 16 provides a ligand contact to an anthocyanidin. Glutamine 354, histidine 369, tryptophan 372, asparagine 373, serine 374, glutamate 377, aspartate 393, and glutamine 394 together coordinate UDP-alpha-D-glucose.

The protein belongs to the UDP-glycosyltransferase family. As to expression, highly expressed in young leaves, at intermediate level in mature leaves and at low levels in flowers and fruits.

It carries out the reaction phloretin + UDP-alpha-D-glucose = trilobatin + UDP + H(+). It catalyses the reaction (2S)-naringenin + UDP-alpha-D-glucose = (2S)-naringenin 7-O-beta-D-glucoside + UDP + H(+). In terms of biological role, glycosyltransferase that possesses phloretin 4'-O-glycosyltransferase activity. Converts phloretin to trilobatin (phloretin 4'-O-glucoside), a potential antioxidant. Can convert with low efficiency phlorizin and trilobatin to their corresponding di-O-glucosides. Can convert with low efficiency naringenin to naringenin-7-O-glucoside. Can convert with low efficiency quercetin to quercetin-7-O-glucoside. This chain is Phloretin 4'-O-glucosyltransferase, found in Malus domestica (Apple).